The primary structure comprises 330 residues: NmrA-like family domain-containing oxidoreductase notO (330 aa).

NADP(+) is bound by residues 12–17 (VGIGSL), 38–42 (HHFAQ), 59–60 (RS), 80–82 (IEA), and 160–163 (LGGG). A helical membrane pass occupies residues 12 to 32 (VGIGSLPAGLVALFMGATSGI). The tract at residues 158–202 (SVLGGGLESPLNEQDLDLRDPKNWTFWSSSMHSGTMGTLTLERIA) is interaction with ASS1. Residues asparagine 180 and asparagine 207 are each glycosylated (N-linked (GlcNAc...) asparagine).

Belongs to the NmrA-type oxidoreductase family.

The protein localises to the membrane. In terms of biological role, nmrA-like family domain-containing oxidoreductase; part of the gene cluster that mediates the biosynthesis of notoamide, a fungal indole alkaloid that belongs to a family of natural products containing a characteristic bicyclo[2.2.2]diazaoctane core. The first step of notoamide biosynthesis involves coupling of L-proline and L-tryptophan by the bimodular NRPS notE, to produce cyclo-L-tryptophan-L-proline called brevianamide F. The reverse prenyltransferase notF then acts as a deoxybrevianamide E synthase and converts brevianamide F to deoxybrevianamide E via reverse prenylation at C-2 of the indole ring leading to the bicyclo[2.2.2]diazaoctane core. Deoxybrevianamide E is further hydroxylated at C-6 of the indole ring, likely catalyzed by the cytochrome P450 monooxygenase notG, to yield 6-hydroxy-deoxybrevianamide E. 6-hydroxy-deoxybrevianamide E is a specific substrate of the prenyltransferase notC for normal prenylation at C-7 to produce 6-hydroxy-7-prenyl-deoxybrevianamide, also called notoamide S. As the proposed pivotal branching point in notoamide biosynthesis, notoamide S can be diverted to notoamide E through an oxidative pyran ring closure putatively catalyzed by either notH cytochrome P450 monooxygenase or the notD FAD-linked oxidoreductase. This step would be followed by an indole 2,3-epoxidation-initiated pinacol-like rearrangement catalyzed by the notB FAD-dependent monooxygenase leading to the formation of notoamide C and notoamide D. On the other hand notoamide S is converted to notoamide T by notH (or notD), a bifunctional oxidase that also functions as the intramolecular Diels-Alderase responsible for generation of (+)-notoamide T. To generate antipodal (-)-notoaminide T, notH' (or notD') in Aspergillus versicolor is expected to catalyze a Diels-Alder reaction leading to the opposite stereochemistry. The remaining oxidoreductase notD (or notH) likely catalyzes the oxidative pyran ring formation to yield (+)-stephacidin A. The FAD-dependent monooxygenase notI is highly similar to notB and is predicted to catalyze a similar conversion from (+)-stephacidin A to (-)-notoamide B via the 2,3-epoxidation of (+)-stephacidin A followed by a pinacol-type rearrangement. Finally, it remains unclear which enzyme could be responsible for the final hydroxylation steps leading to notoamide A and sclerotiamide. The function of notO in the notoamide biosynthesis has not been determined yet. The chain is NmrA-like family domain-containing oxidoreductase notO from Aspergillus sp. (strain MF297-2).